The following is a 462-amino-acid chain: MANKELKRGLGARHIQMIALGGTIGVGLFMGSASTISWTGPSVLLAYAICGIFIFFIMRAMGEMLYVEPSTGSFATFGHQYIHPMAGYITAWSNWFQWIIVGMSEIIAVGSYTKYWFPDLPAWIPGIVAMVILGAANLISVKSFGEFEFWFAMIKIVTIILMIIAGIGIIFFGFGNGGDAIGLSNLWSHGGFFAGGFSGFFFALSLVIAAYQGVELIGITAGEAKDPQNTLRNAIQSIIWRILIFYIGAIFVIVTVYPWDELNSLGSPFVSTFSKIGITAAAGIINFVVITAAMSGCNSGIFSAGRMLYTLGVNGQAPKFFKKISRNGVPLYGTIAVLIGLAVGVVLNYIAPPKIFVYVYSASVLPGMIPWFIILISHIGFRKAKGAALDKHPFKMPFAPFTNYLTIAFLLMVLVGMWFNDDTRISLIVGVIFLALVVISYYVFGIGKRTQANLTKSEQAAE.

12 consecutive transmembrane segments (helical) span residues 17-37 (MIAL…STIS), 38-58 (WTGP…FFIM), 89-109 (ITAW…IIAV), 121-141 (PAWI…LISV), 154-174 (IKIV…FFGF), 190-210 (GGFF…VIAA), 238-258 (IIWR…TVYP), 276-296 (IGIT…AMSG), 331-351 (LYGT…NYIA), 355-375 (IFVY…FIIL), 398-418 (FAPF…VGMW), and 427-447 (LIVG…FGIG).

This sequence belongs to the amino acid-polyamine-organocation (APC) superfamily.

Its subcellular location is the cell membrane. Functionally, probable threonine transporter. Is also active as a minor serine permease. The protein is Probable threonine/serine transporter YbxG (ybxG) of Bacillus subtilis (strain 168).